A 637-amino-acid polypeptide reads, in one-letter code: Interleukin-17 receptor E (637 aa).

A signal peptide spans 1-23 (MGSPRLAALLLSLPLLLIGLAVS). Topologically, residues 24-414 (ARVACPCLRS…VLCPDVSHRH (391 aa)) are extracellular. Positions 87–134 (GSPSLSEESHRISIPSSAISHRGQRTKRAQPSAAEGREHLPEAGSQKC) are disordered. Residues asparagine 278 and asparagine 307 are each glycosylated (N-linked (GlcNAc...) asparagine). A helical transmembrane segment spans residues 415 to 435 (LGLLILALLALTALVGVVLVL). The Cytoplasmic segment spans residues 436–637 (LGRRLLPGSG…TNSPCGFSCL (202 aa)). One can recognise an SEFIR domain in the interval 447 to 583 (TRPVLLLHAA…LLRDLPRLLR (137 aa)).

In terms of assembly, forms heterodimers with IL17RA; the heterodimer binds IL17C. Predominantly expressed in mucosal tissues, including trachea, lung, kidney and stomach. Highly expressed in colon epithelial cells. Also expressed in testis. Low expression, if any, in heart, liver, spleen, or brain. Among CD4 T-helper cells, expressed at high levels in Th17 cells.

Its subcellular location is the cell membrane. The protein resides in the secreted. It is found in the cytoplasm. Its function is as follows. Specific functional receptor for IL17C, signaling through the NF-kappa-B and MAPK pathways. Requires TRAF3IP2 /ACT1 for signaling. Crucial regulator in innate immunity to bacterial pathogens, such as Citrobacter rodentium. Isoform 4 and isoform 5 may be either cytoplasmic inactive or dominant active forms. Isoform 2 and isoform 3 may act as soluble decoy receptors. The protein is Interleukin-17 receptor E (Il17re) of Mus musculus (Mouse).